The primary structure comprises 980 residues: Valine--tRNA ligase (980 aa).

The 'HIGH' region motif lies at 43–53 (PNVTGTLHMGH). Residues 586–590 (KMSKS) carry the 'KMSKS' region motif. Lysine 589 provides a ligand contact to ATP. Residues 914 to 978 (LVDMDAERTR…QLTGLREQRA (65 aa)) are a coiled coil.

This sequence belongs to the class-I aminoacyl-tRNA synthetase family. ValS type 1 subfamily. In terms of assembly, monomer.

The protein localises to the cytoplasm. The enzyme catalyses tRNA(Val) + L-valine + ATP = L-valyl-tRNA(Val) + AMP + diphosphate. In terms of biological role, catalyzes the attachment of valine to tRNA(Val). As ValRS can inadvertently accommodate and process structurally similar amino acids such as threonine, to avoid such errors, it has a 'posttransfer' editing activity that hydrolyzes mischarged Thr-tRNA(Val) in a tRNA-dependent manner. In Xanthomonas euvesicatoria pv. vesicatoria (strain 85-10) (Xanthomonas campestris pv. vesicatoria), this protein is Valine--tRNA ligase.